A 240-amino-acid polypeptide reads, in one-letter code: RxLR effector protein PexRD20 (240 aa).

A signal peptide spans 1–23 (MRCHYFVLLAVAAFLAGANVAVA). The RxLR-dEER signature appears at 43 to 58 (RALRSHTKATDHGEER).

The protein belongs to the RxLR effector family.

Its subcellular location is the secreted. It localises to the host cytoplasm. The protein resides in the host nucleus. The protein localises to the host nucleolus. Its function is as follows. Effector that enhances P.infestans colonization of Nicotiana benthamiana leaves. The chain is RxLR effector protein PexRD20 from Phytophthora infestans (strain T30-4) (Potato late blight agent).